We begin with the raw amino-acid sequence, 223 residues long: 3,4-dihydroxy-2-butanone 4-phosphate synthase (223 aa).

D-ribulose 5-phosphate is bound by residues 47–48, Asp-52, 160–164, and Glu-184; these read RE and RRGHT. Glu-48 lines the Mg(2+) pocket. Residue His-163 participates in Mg(2+) binding.

It belongs to the DHBP synthase family. In terms of assembly, homodimer. Mg(2+) serves as cofactor. Mn(2+) is required as a cofactor.

The catalysed reaction is D-ribulose 5-phosphate = (2S)-2-hydroxy-3-oxobutyl phosphate + formate + H(+). Its pathway is cofactor biosynthesis; riboflavin biosynthesis; 2-hydroxy-3-oxobutyl phosphate from D-ribulose 5-phosphate: step 1/1. Functionally, catalyzes the conversion of D-ribulose 5-phosphate to formate and 3,4-dihydroxy-2-butanone 4-phosphate. The polypeptide is 3,4-dihydroxy-2-butanone 4-phosphate synthase (Cupriavidus pinatubonensis (strain JMP 134 / LMG 1197) (Cupriavidus necator (strain JMP 134))).